Here is a 394-residue protein sequence, read N- to C-terminus: Elongation factor Tu (394 aa).

The tr-type G domain occupies 10-205; it reads KPHMNVGTIG…SMDNYFDLPE (196 aa). The interval 19–26 is G1; the sequence is GHVDHGKT. 19-26 is a binding site for GTP; the sequence is GHVDHGKT. Position 26 (threonine 26) interacts with Mg(2+). The G2 stretch occupies residues 61–65; that stretch reads GITIN. Residues 82-85 form a G3 region; sequence DCPG. GTP contacts are provided by residues 82–86 and 137–140; these read DCPGH and NKLD. Positions 137–140 are G4; sequence NKLD. A G5 region spans residues 173–175; that stretch reads SAF.

Belongs to the TRAFAC class translation factor GTPase superfamily. Classic translation factor GTPase family. EF-Tu/EF-1A subfamily. In terms of assembly, monomer.

The protein localises to the cytoplasm. The enzyme catalyses GTP + H2O = GDP + phosphate + H(+). Its function is as follows. GTP hydrolase that promotes the GTP-dependent binding of aminoacyl-tRNA to the A-site of ribosomes during protein biosynthesis. In Borreliella afzelii (strain PKo) (Borrelia afzelii), this protein is Elongation factor Tu.